Here is a 112-residue protein sequence, read N- to C-terminus: Protein SMALL AUXIN UP-REGULATED RNA 10 (112 aa).

It belongs to the ARG7 family. In terms of tissue distribution, confined to the veins and petioles of rosette leaves and cauline leaves, and specifically expressed at the abaxial side of inflorescence branche; relocates to both the adaxial (Ad) and abaxial (Ab) sides of the branch in reduced red:far-red (R:FR) light, during shade. Also present in flowers.

It is found in the cell membrane. Its function is as follows. Provide a mechanistic link between auxin and plasma membrane H(+)-ATPases (PM H(+)-ATPases, e.g. AHA1 and AHA2), and triggers PM H(+)-ATPases activity by promoting phosphorylation of their C-terminal autoinhibitory domain as a result of PP2C-D subfamily of type 2C phosphatases inhibition, thus leading to the acidification of the apoplast and the facilitation of solutes and water uptake to drive cell expansion. Triggers plant growth probably by promoting cell elongation. Regulates branch angles and bending. This Arabidopsis thaliana (Mouse-ear cress) protein is Protein SMALL AUXIN UP-REGULATED RNA 10.